The chain runs to 91 residues: Small ribosomal subunit protein bS20 (91 aa).

The segment at methionine 1–alanine 23 is disordered.

This sequence belongs to the bacterial ribosomal protein bS20 family.

In terms of biological role, binds directly to 16S ribosomal RNA. This Rhizobium rhizogenes (strain K84 / ATCC BAA-868) (Agrobacterium radiobacter) protein is Small ribosomal subunit protein bS20.